The following is a 231-amino-acid chain: GrpE protein homolog, mitochondrial (231 aa).

Positions Ser49–Lys71 are disordered.

It belongs to the GrpE family. In terms of assembly, component of the PAM complex, at least composed of mtHsp70, MGE1, TIM44, PAM16, PAM17 and PAM18.

Its subcellular location is the mitochondrion matrix. Its function is as follows. Essential component of the PAM complex, a complex required for the translocation of transit peptide-containing proteins from the inner membrane into the mitochondrial matrix in an ATP-dependent manner. Seems to control the nucleotide-dependent binding of SSC1 to substrate proteins. This chain is GrpE protein homolog, mitochondrial (mge1), found in Candida glabrata (strain ATCC 2001 / BCRC 20586 / JCM 3761 / NBRC 0622 / NRRL Y-65 / CBS 138) (Yeast).